The chain runs to 83 residues: Cytochrome b559 subunit alpha (83 aa).

A helical transmembrane segment spans residues 21-35 (VIHSITIPSLFIAGW). Heme is bound at residue His23.

It belongs to the PsbE/PsbF family. Heterodimer of an alpha subunit and a beta subunit. PSII is composed of 1 copy each of membrane proteins PsbA, PsbB, PsbC, PsbD, PsbE, PsbF, PsbH, PsbI, PsbJ, PsbK, PsbL, PsbM, PsbT, PsbX, PsbY, PsbZ, Psb30/Ycf12, at least 3 peripheral proteins of the oxygen-evolving complex and a large number of cofactors. It forms dimeric complexes. The cofactor is heme b.

It localises to the plastid. The protein resides in the chloroplast thylakoid membrane. Its function is as follows. This b-type cytochrome is tightly associated with the reaction center of photosystem II (PSII). PSII is a light-driven water:plastoquinone oxidoreductase that uses light energy to abstract electrons from H(2)O, generating O(2) and a proton gradient subsequently used for ATP formation. It consists of a core antenna complex that captures photons, and an electron transfer chain that converts photonic excitation into a charge separation. The sequence is that of Cytochrome b559 subunit alpha from Adiantum capillus-veneris (Maidenhair fern).